The primary structure comprises 225 residues: MLTDSALLTLLQWVSPALPIGGFNYSEGLETLIAQGQITSAAALQDWLGFELAFGSAQWETAVMARVYRAIAKGDFEAVHQWNAWLSAARESAELRAQNWQMGTALINLVAALDRLPPALQTGQPYPWNVSVAFCIAANLADIPLETALLGYLHSWATTLINAAVKLIPLGQTAGQLLLRQLQPQIQQTVQQSLNVTDDNLESCTLGLALASMQHETLYCRLFRS.

It belongs to the UreF family. UreD, UreF and UreG form a complex that acts as a GTP-hydrolysis-dependent molecular chaperone, activating the urease apoprotein by helping to assemble the nickel containing metallocenter of UreC. The UreE protein probably delivers the nickel.

It is found in the cytoplasm. Functionally, required for maturation of urease via the functional incorporation of the urease nickel metallocenter. This chain is Urease accessory protein UreF, found in Thermosynechococcus vestitus (strain NIES-2133 / IAM M-273 / BP-1).